Consider the following 136-residue polypeptide: Large ribosomal subunit protein uL16 (136 aa).

Belongs to the universal ribosomal protein uL16 family. In terms of assembly, part of the 50S ribosomal subunit.

Binds 23S rRNA and is also seen to make contacts with the A and possibly P site tRNAs. This chain is Large ribosomal subunit protein uL16, found in Rickettsia felis (strain ATCC VR-1525 / URRWXCal2) (Rickettsia azadi).